Here is a 73-residue protein sequence, read N- to C-terminus: Large ribosomal subunit protein uL29 (73 aa).

The interval 1 to 20 (MYKAKDLRDQSLEELEATHD) is disordered.

It belongs to the universal ribosomal protein uL29 family.

The sequence is that of Large ribosomal subunit protein uL29 from Protochlamydia amoebophila (strain UWE25).